The sequence spans 636 residues: Plasma kallikrein (636 aa).

An N-terminal signal peptide occupies residues 1 to 19 (MIALRQAAYFICLFATVSC). Apple domains are found at residues 21–104 (CLTQ…LKRC), 111–194 (CHRS…LKAC), 201–284 (CRVD…LLTC), and 294–377 (CHSK…LRLC). Disulfide bonds link C21/C104, C47/C77, C51/C57, C111/C194, C137/C166, C141/C147, C201/C284, C227/C256, C231/C237, C294/C377, C320/C349, and C324/C330. N-linked (GlcNAc...) asparagine glycosylation is found at N66 and N127. 2 N-linked (GlcNAc...) asparagine glycosylation sites follow: N361 and N397. The region spanning 392–627 (IVGGTNASWG…YVDWILEKTQ (236 aa)) is the Peptidase S1 domain. Cysteines 420 and 436 form a disulfide. The active-site Charge relay system is H435. N-linked (GlcNAc...) asparagine glycosylation occurs at N454. Catalysis depends on D484, which acts as the Charge relay system. A glycan (N-linked (GlcNAc...) asparagine) is linked at N495. Disulfide bonds link C518–C585, C549–C564, and C575–C603. S579 serves as the catalytic Charge relay system.

It belongs to the peptidase S1 family. Plasma kallikrein subfamily. In terms of assembly, forms a heterodimer with SERPINA5. The zymogen is activated by factor XIIa, which cleaves the molecule into a light chain, which contains the active site, and a heavy chain, which associates with HMW kininogen. These chains are linked by one or more disulfide bonds.

Its subcellular location is the secreted. It carries out the reaction Cleaves selectively Arg-|-Xaa and Lys-|-Xaa bonds, including Lys-|-Arg and Arg-|-Ser bonds in (human) kininogen to release bradykinin.. With respect to regulation, inhibited by SERPINA5. Functionally, the enzyme cleaves Lys-Arg and Arg-Ser bonds. It activates, in a reciprocal reaction, factor XII after its binding to a negatively charged surface. It also releases bradykinin from HMW kininogen and may also play a role in the renin-angiotensin system by converting prorenin into renin. The chain is Plasma kallikrein (KLKB1) from Bos taurus (Bovine).